The primary structure comprises 673 residues: L-type lectin-domain containing receptor kinase SIT2 (673 aa).

Residues 1 to 27 (MVLPKPEMPFFVLLLFLGLGCLRPAAA) form the signal peptide. Over 28–296 (TDERFVFNGF…FPKPRSKTLE (269 aa)) the chain is Extracellular. Residues 32–270 (FVFNGFTGAN…VLGWSFKMNG (239 aa)) form a legume-lectin like region. N-linked (GlcNAc...) asparagine glycans are attached at residues asparagine 41, asparagine 60, asparagine 82, asparagine 118, asparagine 138, asparagine 191, asparagine 214, asparagine 235, and asparagine 276. A helical membrane pass occupies residues 297–317 (IVLPIASAVLVFAVAAAVFVF). Topologically, residues 318–673 (MRRRRMFSEL…GTFSDLSGGR (356 aa)) are cytoplasmic. A Protein kinase domain is found at 352–631 (FSDKRLLGIG…LEGDVPLPEL (280 aa)). ATP-binding positions include 358-366 (LGIGGFGRV) and lysine 381. Aspartate 477 acts as the Proton acceptor in catalysis.

The protein in the C-terminal section; belongs to the protein kinase superfamily. Ser/Thr protein kinase family. This sequence in the N-terminal section; belongs to the leguminous lectin family. As to expression, mainly expressed in root epidermal cells.

It is found in the cell membrane. The catalysed reaction is L-seryl-[protein] + ATP = O-phospho-L-seryl-[protein] + ADP + H(+). It carries out the reaction L-threonyl-[protein] + ATP = O-phospho-L-threonyl-[protein] + ADP + H(+). In terms of biological role, lectin-domain containing receptor kinase involved in salt stress response. Acts as a negative regulator of salt tolerance. The polypeptide is L-type lectin-domain containing receptor kinase SIT2 (Oryza sativa subsp. japonica (Rice)).